The sequence spans 206 residues: Small ribosomal subunit protein uS4 (206 aa).

The tract at residues 18–44 (NIWGRPKSPVNRREYGPGQHGQRRKGK) is disordered. An S4 RNA-binding domain is found at 94–157 (RRLDAVVYRA…KQLAVVLEAV (64 aa)).

It belongs to the universal ribosomal protein uS4 family. In terms of assembly, part of the 30S ribosomal subunit. Contacts protein S5. The interaction surface between S4 and S5 is involved in control of translational fidelity.

One of the primary rRNA binding proteins, it binds directly to 16S rRNA where it nucleates assembly of the body of the 30S subunit. Functionally, with S5 and S12 plays an important role in translational accuracy. In Jannaschia sp. (strain CCS1), this protein is Small ribosomal subunit protein uS4.